The sequence spans 439 residues: Xaa-Pro dipeptidase (439 aa).

Asp-244, Asp-255, His-335, Glu-380, and Glu-418 together coordinate Mn(2+).

The protein belongs to the peptidase M24B family. Bacterial-type prolidase subfamily. Mn(2+) is required as a cofactor.

The enzyme catalyses Xaa-L-Pro dipeptide + H2O = an L-alpha-amino acid + L-proline. Splits dipeptides with a prolyl residue in the C-terminal position. The chain is Xaa-Pro dipeptidase from Shewanella frigidimarina (strain NCIMB 400).